Consider the following 307-residue polypeptide: 2,4-diacetylphloroglucinol hydrolase (307 aa).

Zn(2+)-binding residues include His-142, Glu-173, His-283, and Glu-287.

Belongs to the DAPG/phloretin hydrolase family. Zn(2+) is required as a cofactor.

It catalyses the reaction 2,4-diacetylphloroglucinol + H2O = 2-acetylphloroglucinol + acetate. Activity is strongly reduced by pyoluteorin, an antifungal compound produced by the bacterium. Its function is as follows. Hydrolase that specifically degrades the potent antimicrobial compound 2,4-diacetylphloroglucinol (DAPG) to equimolar amounts of mildly toxic monoacetylphloroglucinol (MAPG) and acetate. Does not degrade other compounds with structures similar to DAPG, such as MAPG and triacetylphloroglucinol, suggesting strict substrate specificity. Degradation of DAPG to MAPG may provide an additional means of fine-tuning levels of this antibiotic or may help avoid accumulation of a metabolite that at high levels may become toxic to the producing bacterium. The protein is 2,4-diacetylphloroglucinol hydrolase of Pseudomonas protegens (strain DSM 19095 / LMG 27888 / CFBP 6595 / CHA0).